Consider the following 352-residue polypeptide: Replication factor C subunit 5 (352 aa).

It belongs to the activator 1 small subunits family. As to quaternary structure, heteropentamer of subunits rfc1, rfc2, rfc3, rfc4 and rfc5 that forms a complex with PCNA in the presence of ATP.

The protein resides in the nucleus. Functionally, the elongation of primed DNA templates by DNA polymerase delta and epsilon requires the action of the accessory proteins proliferating cell nuclear antigen (PCNA) and activator 1. This is Replication factor C subunit 5 from Neurospora crassa (strain ATCC 24698 / 74-OR23-1A / CBS 708.71 / DSM 1257 / FGSC 987).